The following is a 295-amino-acid chain: Probable isochorismatase (295 aa).

The disordered stretch occupies residues 1 to 21 (MGIPKIAGYPLPTPAEFPDNR). A Carrier domain is found at 207–286 (EIRSQKPLTL…EWWLVIEQAR (80 aa)). At Ser247 the chain carries O-(pantetheine 4'-phosphoryl)serine.

The protein belongs to the isochorismatase family. It depends on pantetheine 4'-phosphate as a cofactor.

The catalysed reaction is isochorismate + H2O = (2S,3S)-2,3-dihydroxy-2,3-dihydrobenzoate + pyruvate. It participates in siderophore biosynthesis; vulnibactin biosynthesis. Involved in the biosynthesis of the catechol siderophore vulnibactin. Vulnibactin is a chelating compound involved in transporting iron from the bacterial environment into the cell cytoplasm. This Vibrio vulnificus (strain CMCP6) protein is Probable isochorismatase (venB).